The chain runs to 102 residues: Protein V2 (102 aa).

In terms of biological role, may be involved in the regulation of ssDNA versus dsDNA levels. In Beet curly top virus (strain California/Logan) (BCTV), this protein is Protein V2.